Here is a 289-residue protein sequence, read N- to C-terminus: uncharacterized protein (289 aa).

Positions Met1–Gly23 are cleaved as a signal peptide. Residues Asn74, Asn101, Asn132, and Asn285 are each glycosylated (N-linked (GlcNAc...) asparagine).

Its subcellular location is the secreted. This is an uncharacterized protein from Dictyostelium discoideum (Social amoeba).